The chain runs to 393 residues: NAD(P)H-quinone oxidoreductase subunit H, chloroplastic (393 aa).

This sequence belongs to the complex I 49 kDa subunit family. In terms of assembly, NDH is composed of at least 16 different subunits, 5 of which are encoded in the nucleus.

It is found in the plastid. The protein localises to the chloroplast thylakoid membrane. The catalysed reaction is a plastoquinone + NADH + (n+1) H(+)(in) = a plastoquinol + NAD(+) + n H(+)(out). It carries out the reaction a plastoquinone + NADPH + (n+1) H(+)(in) = a plastoquinol + NADP(+) + n H(+)(out). Functionally, NDH shuttles electrons from NAD(P)H:plastoquinone, via FMN and iron-sulfur (Fe-S) centers, to quinones in the photosynthetic chain and possibly in a chloroplast respiratory chain. The immediate electron acceptor for the enzyme in this species is believed to be plastoquinone. Couples the redox reaction to proton translocation, and thus conserves the redox energy in a proton gradient. In Huperzia lucidula (Shining clubmoss), this protein is NAD(P)H-quinone oxidoreductase subunit H, chloroplastic.